Consider the following 423-residue polypeptide: Diaminobutyrate--2-oxoglutarate transaminase (423 aa).

K271 carries the post-translational modification N6-(pyridoxal phosphate)lysine.

This sequence belongs to the class-III pyridoxal-phosphate-dependent aminotransferase family. The cofactor is pyridoxal 5'-phosphate.

It carries out the reaction L-2,4-diaminobutanoate + 2-oxoglutarate = L-aspartate 4-semialdehyde + L-glutamate. It participates in amine and polyamine biosynthesis; ectoine biosynthesis; L-ectoine from L-aspartate 4-semialdehyde: step 1/3. Functionally, catalyzes reversively the conversion of L-aspartate beta-semialdehyde (ASA) to L-2,4-diaminobutyrate (DABA) by transamination with L-glutamate. This Streptomyces avermitilis (strain ATCC 31267 / DSM 46492 / JCM 5070 / NBRC 14893 / NCIMB 12804 / NRRL 8165 / MA-4680) protein is Diaminobutyrate--2-oxoglutarate transaminase (ectB).